Reading from the N-terminus, the 604-residue chain is uncharacterized protein (604 aa).

The signal sequence occupies residues Met-1 to Ser-40. Topologically, residues His-41–Gly-563 are extracellular. Asn-337 carries an N-linked (GlcNAc...) asparagine glycan. Residues Leu-564–Phe-584 form a helical membrane-spanning segment. Over Lys-585 to Val-604 the chain is Cytoplasmic.

It localises to the membrane. This is an uncharacterized protein from Xenopus laevis (African clawed frog).